The primary structure comprises 367 residues: Auxin efflux carrier component 8 (367 aa).

The Extracellular segment spans residues 1–6 (MISWLD). Residues 7 to 27 (IYHVVSATVPLYVSMTLGFLS) form a helical membrane-spanning segment. Over 28–38 (ARHLKLFSPEQ) the chain is Cytoplasmic. The helical transmembrane segment at 39 to 59 (CAGINKFVAKFSIPLLSFQII) threads the bilayer. Ile51 contributes to the (indol-3-yl)acetate binding site. The Extracellular portion of the chain corresponds to 60–69 (SENNPFKMSP). A helical membrane pass occupies residues 70 to 90 (KLILSDILQKFLVVVVLAMVL). At 91-105 (RFWHPTGGRGGKLGW) the chain is on the cytoplasmic side. The chain crosses the membrane as a helical span at residues 106 to 126 (VITGLSISVLPNTLILGMPIL). The (indol-3-yl)acetate site is built by Asn117 and Leu119. Residues 127–136 (SAIYGDEAAS) lie on the Extracellular side of the membrane. The helical transmembrane segment at 137 to 157 (ILEQIVVLQSLIWYTILLFLF) threads the bilayer. A (indol-3-yl)acetate-binding site is contributed by Tyr150. The Cytoplasmic portion of the chain corresponds to 158-227 (ELNAARALPS…LIINPNTYAT (70 aa)). The interval 168–194 (SGASLEHTGNDQEEANIEDEPKEEEDE) is disordered. Residues 178-194 (DQEEANIEDEPKEEEDE) are compositionally biased toward acidic residues. A helical membrane pass occupies residues 228–248 (LIGIIWATLHFRLGWNLPEMI). The Extracellular segment spans residues 249–251 (DKS). The chain crosses the membrane as a helical span at residues 252 to 272 (IHLLSDGGLGMAMFSLGLFMA). Over 273–288 (SQSSIIACGTKMAIIT) the chain is Cytoplasmic. A helical transmembrane segment spans residues 289-309 (MLLKFVLGPALMIASAYCIRL). At 310–312 (KST) the chain is on the extracellular side. The helical transmembrane segment at 313–333 (LFKVAILQAALPQGVVPFVFA) threads the bilayer. (indol-3-yl)acetate contacts are provided by Val327 and Val328. At 334–344 (KEYNLHPEIIS) the chain is on the cytoplasmic side. A helical transmembrane segment spans residues 345–365 (TGVIFGMLIALPTTLAYYFLL). Topologically, residues 366–367 (DL) are extracellular.

It belongs to the auxin efflux carrier (TC 2.A.69.1) family. As to quaternary structure, homodimer. Expressed in veins of mature leaves. Strongly expressed in pollen.

It localises to the endoplasmic reticulum membrane. The protein resides in the cell membrane. With respect to regulation, auxin efflux carrier activity is competitively inhibited by naptalamate (N-1-naphthylphthalamic acid, NPA). Acts as a component of the auxin efflux carrier. Component of the intracellular auxin-transport pathway in the male gametophyte. Involved in the regulation of auxin homeostasis in pollen. Involved in the efflux of auxin from the endoplasmic reticulum into the cytoplasm. Binds auxins including indole-3-acetic acid (IAA), naphthaleneacetic acid (NAA) and the herbicide 2,4-dichlorophenoxyacetic acid (2,4-D), but barely indole-3-butyric acid (IBA) and 2-phenylacetic acid (PAA). PIN5 and PIN8 may have an antagonistic/compensatory activity. Involved in the control of vein patterning. Redundantly with PIN6, inhibits the vein-formation-promoting functions of PIN5. PIN5, PIN6, and PIN8 control vein network geometry, but they are expressed in mutually exclusive domains of leaf vascular cells. The sequence is that of Auxin efflux carrier component 8 from Arabidopsis thaliana (Mouse-ear cress).